The sequence spans 344 residues: Uroporphyrinogen decarboxylase (344 aa).

Residues 26 to 30 (RQAGR), Asp-75, Tyr-150, Ser-205, and His-323 each bind substrate.

Belongs to the uroporphyrinogen decarboxylase family. In terms of assembly, homodimer.

The protein localises to the cytoplasm. It catalyses the reaction uroporphyrinogen III + 4 H(+) = coproporphyrinogen III + 4 CO2. It functions in the pathway porphyrin-containing compound metabolism; protoporphyrin-IX biosynthesis; coproporphyrinogen-III from 5-aminolevulinate: step 4/4. Functionally, catalyzes the decarboxylation of four acetate groups of uroporphyrinogen-III to yield coproporphyrinogen-III. The chain is Uroporphyrinogen decarboxylase from Corynebacterium diphtheriae (strain ATCC 700971 / NCTC 13129 / Biotype gravis).